The primary structure comprises 172 residues: ATP synthase subunit b (172 aa).

The helical transmembrane segment at 12-32 threads the bilayer; that stretch reads VGFNAGTMLFQLVAMLILLAL.

Belongs to the ATPase B chain family. As to quaternary structure, F-type ATPases have 2 components, F(1) - the catalytic core - and F(0) - the membrane proton channel. F(1) has five subunits: alpha(3), beta(3), gamma(1), delta(1), epsilon(1). F(0) has three main subunits: a(1), b(2) and c(10-14). The alpha and beta chains form an alternating ring which encloses part of the gamma chain. F(1) is attached to F(0) by a central stalk formed by the gamma and epsilon chains, while a peripheral stalk is formed by the delta and b chains.

The protein resides in the cell membrane. In terms of biological role, f(1)F(0) ATP synthase produces ATP from ADP in the presence of a proton or sodium gradient. F-type ATPases consist of two structural domains, F(1) containing the extramembraneous catalytic core and F(0) containing the membrane proton channel, linked together by a central stalk and a peripheral stalk. During catalysis, ATP synthesis in the catalytic domain of F(1) is coupled via a rotary mechanism of the central stalk subunits to proton translocation. Functionally, component of the F(0) channel, it forms part of the peripheral stalk, linking F(1) to F(0). The polypeptide is ATP synthase subunit b (Bacillus licheniformis (strain ATCC 14580 / DSM 13 / JCM 2505 / CCUG 7422 / NBRC 12200 / NCIMB 9375 / NCTC 10341 / NRRL NRS-1264 / Gibson 46)).